Here is a 517-residue protein sequence, read N- to C-terminus: Intermediate filament family orphan 2 (517 aa).

In terms of domain architecture, IF rod spans 53–484 (NIHLLKGLNV…RLIKGSADRN (432 aa)). 3 disordered regions span residues 104–129 (EQAV…SSGA), 330–349 (KVAS…RFSD), and 478–517 (KGSA…PMVS). Positions 485-497 (SPSPSSVASSDSG) are enriched in low complexity. The span at 501–517 (EIQDEFEREADVEPMVS) shows a compositional bias: acidic residues.

The protein belongs to the intermediate filament family.

In Homo sapiens (Human), this protein is Intermediate filament family orphan 2 (IFFO2).